The primary structure comprises 138 residues: Large ribosomal subunit protein uL16 (138 aa).

Over residues 1-19 (MLIPKRVKYRRQHRPHRSG) the composition is skewed to basic residues. The interval 1–24 (MLIPKRVKYRRQHRPHRSGVSKGG) is disordered.

This sequence belongs to the universal ribosomal protein uL16 family. In terms of assembly, part of the 50S ribosomal subunit.

Its function is as follows. Binds 23S rRNA and is also seen to make contacts with the A and possibly P site tRNAs. This chain is Large ribosomal subunit protein uL16, found in Corynebacterium jeikeium (strain K411).